Consider the following 122-residue polypeptide: Basic phospholipase A2 homolog (122 aa).

Intrachain disulfides connect Cys-26/Cys-116, Cys-28/Cys-44, Cys-43/Cys-96, Cys-49/Cys-122, Cys-50/Cys-89, Cys-57/Cys-82, and Cys-75/Cys-87. The important for membrane-damaging activities in eukaryotes and bacteria; heparin-binding stretch occupies residues 106–117; it reads KKHRVTVKFLCK.

The protein belongs to the phospholipase A2 family. Group II subfamily. K49 sub-subfamily. Homodimer; non-covalently linked. Expressed by the venom gland.

It is found in the secreted. Functionally, snake venom phospholipase A2 (PLA2) that has almost no phospholipase A2 activity. Is myotoxic. Displays edema-inducing activities. A model of myotoxic mechanism has been proposed: an apo Lys49-PLA2 is activated by the entrance of a hydrophobic molecule (e.g. fatty acid) at the hydrophobic channel of the protein leading to a reorientation of a monomer. This reorientation causes a transition between 'inactive' to 'active' states, causing alignment of C-terminal and membrane-docking sites (MDoS) side-by-side and putting the membrane-disruption sites (MDiS) in the same plane, exposed to solvent and in a symmetric position for both monomers. The MDoS region stabilizes the toxin on membrane by the interaction of charged residues with phospholipid head groups. Subsequently, the MDiS region destabilizes the membrane with penetration of hydrophobic residues. This insertion causes a disorganization of the membrane, allowing an uncontrolled influx of ions (i.e. calcium and sodium), and eventually triggering irreversible intracellular alterations and cell death. This chain is Basic phospholipase A2 homolog, found in Protobothrops mucrosquamatus (Taiwan habu).